A 236-amino-acid chain; its full sequence is F-box and leucine-rich protein 22 (236 aa).

The region spanning 1–46 (MHITQLNRECLLCLFSFLDKDSRRSLSRTCSQLRDVFEDPTLWPLL) is the F-box domain. 6 LRR repeats span residues 15–40 (FSFLDKDSRRSLSRTCSQLRDVFEDP), 43–72 (WPLLHFHSLAELKKDNFRLSPALRSLSICW), 98–123 (HESLVNDFLLQVCNRCPNLTSVTLSG), 124–149 (CGHVTDDCLARLLLSCPRLRTLRLEN), 150–175 (CARVTNRTLAAVAAHGRALQTLHVDF), and 176–201 (CRNVSAAGLLRLRAACPNLRLSAERS).

Directly interacts with SKP1 and CUL1. As to expression, enriched in cardiac muscle (at protein level).

The protein localises to the cytoplasm. The protein resides in the myofibril. Its subcellular location is the sarcomere. It is found in the z line. It functions in the pathway protein modification; protein ubiquitination. Functionally, substrate-recognition component of the SCF (SKP1-CUL1-F-box protein)-type E3 ubiquitin ligase complex. Promotes ubiquitination of sarcomeric proteins alpha-actinin-2 (ACTN2) and filamin-C (FLNC). This chain is F-box and leucine-rich protein 22 (Fbxl22), found in Mus musculus (Mouse).